The following is a 424-amino-acid chain: MSNTQSFFSQSLAERDAPIRSSLLKELERQQSQVELIASENIVSRAVLEAQGSVLTNKYAEGYPGKRYYGGCEYADEVESLAIDRVKQLFNAGFANVQPHSGAQANGAVMLALTKPGDTVLGMSLDAGGHLTHGAKPALSGKWFNAMQYGVNRDTMLIDYEQVEKLAQEHKPSLIIAGFSAYPRKLDFARFRAIADSVGAKLMVDMAHIAGVIAAGRHDNPVDHAHVVTSTTHKTLRGPRGGFVLTNDEEIAKKINSAVFPGLQGGPLMHVIAGKAVAFGEALKPEFKTYIDSVLANAKALGEVLKAGGVDLVTGGTDNHLLLVDLRPKGLKGTQVEQALERAGITCNKNGIPFDTEKPTITSGIRLGTPAATTRGFGVAEFEQIGRLILEVFEALRANPDGDRATEHRVRSEIFALCDRFPIY.

(6S)-5,6,7,8-tetrahydrofolate is bound by residues Leu125 and 129–131 (GHL). The residue at position 234 (Lys234) is an N6-(pyridoxal phosphate)lysine. Glu250 contacts (6S)-5,6,7,8-tetrahydrofolate.

The protein belongs to the SHMT family. As to quaternary structure, homodimer. It depends on pyridoxal 5'-phosphate as a cofactor.

It is found in the cytoplasm. It catalyses the reaction (6R)-5,10-methylene-5,6,7,8-tetrahydrofolate + glycine + H2O = (6S)-5,6,7,8-tetrahydrofolate + L-serine. It participates in one-carbon metabolism; tetrahydrofolate interconversion. The protein operates within amino-acid biosynthesis; glycine biosynthesis; glycine from L-serine: step 1/1. Catalyzes the reversible interconversion of serine and glycine with tetrahydrofolate (THF) serving as the one-carbon carrier. This reaction serves as the major source of one-carbon groups required for the biosynthesis of purines, thymidylate, methionine, and other important biomolecules. Also exhibits THF-independent aldolase activity toward beta-hydroxyamino acids, producing glycine and aldehydes, via a retro-aldol mechanism. The chain is Serine hydroxymethyltransferase 2 from Ralstonia nicotianae (strain ATCC BAA-1114 / GMI1000) (Ralstonia solanacearum).